The primary structure comprises 627 residues: tRNA uridine 5-carboxymethylaminomethyl modification enzyme MnmG (627 aa).

FAD-binding positions include 16–21 (GAGHAG), Val-128, and Ser-183. NAD(+) is bound at residue 277-291 (GPRYCPSIEDKIVRF). Residue Gln-374 participates in FAD binding.

The protein belongs to the MnmG family. Homodimer. Heterotetramer of two MnmE and two MnmG subunits. It depends on FAD as a cofactor.

The protein resides in the cytoplasm. NAD-binding protein involved in the addition of a carboxymethylaminomethyl (cmnm) group at the wobble position (U34) of certain tRNAs, forming tRNA-cmnm(5)s(2)U34. The sequence is that of tRNA uridine 5-carboxymethylaminomethyl modification enzyme MnmG from Finegoldia magna (strain ATCC 29328 / DSM 20472 / WAL 2508) (Peptostreptococcus magnus).